The chain runs to 451 residues: MKGIPSSSNQILNQDLVEDQSFELEDWLPITASRNANWYYSAFHNVTAIVGAGVLGLPYAMSELGWGPGVVVLILSWVITLYTFWQMIEMHEMFEGKRFDRYHELGQAAFGKKLGLYIVVPLQLLVETSACIVYMVTGGESLKKIHQLSVGDYECRKLKVRHFILIFASSQFVLSLLKNFNSISGVSLVAAVMSMSYSTIAWVASLTKGVANNVEYGYKRRNNTSVPLAFLGALGEMAFAYAGHNVVLEIQATIPSTPENPSKRPMWKGAIVAYIIVAFCYFPVALVGFWTFGNNVEENILKTLRGPKGLIIVANIFVIIHLMGSYQVYAMPVFDMIESVMIKKWHFSPTRVLRFTIRWTFVAATMGIAVALPHFSALLSFFGGFIFAPTTYFIPCIIWLILKKPKRFSLSWCINWICIILGVLVMIIAPIGGLAKLMNALKQPDSSCKST.

Residues 1 to 40 (MKGIPSSSNQILNQDLVEDQSFELEDWLPITASRNANWYY) are Cytoplasmic-facing. Residues 41–61 (SAFHNVTAIVGAGVLGLPYAM) form a helical membrane-spanning segment. The Extracellular portion of the chain corresponds to 62–63 (SE). Residues 64 to 84 (LGWGPGVVVLILSWVITLYTF) form a helical membrane-spanning segment. Residues 85 to 115 (WQMIEMHEMFEGKRFDRYHELGQAAFGKKLG) lie on the Cytoplasmic side of the membrane. Residues 116-136 (LYIVVPLQLLVETSACIVYMV) form a helical membrane-spanning segment. Residues 137-159 (TGGESLKKIHQLSVGDYECRKLK) lie on the Extracellular side of the membrane. The chain crosses the membrane as a helical span at residues 160–177 (VRHFILIFASSQFVLSLL). At 178–182 (KNFNS) the chain is on the cytoplasmic side. The chain crosses the membrane as a helical span at residues 183 to 203 (ISGVSLVAAVMSMSYSTIAWV). The Extracellular segment spans residues 204–227 (ASLTKGVANNVEYGYKRRNNTSVP). Residues 228–248 (LAFLGALGEMAFAYAGHNVVL) traverse the membrane as a helical segment. Topologically, residues 249 to 269 (EIQATIPSTPENPSKRPMWKG) are cytoplasmic. Residues 270 to 290 (AIVAYIIVAFCYFPVALVGFW) traverse the membrane as a helical segment. Residues 291-309 (TFGNNVEENILKTLRGPKG) lie on the Extracellular side of the membrane. The helical transmembrane segment at 310-330 (LIIVANIFVIIHLMGSYQVYA) threads the bilayer. Residues 331–358 (MPVFDMIESVMIKKWHFSPTRVLRFTIR) lie on the Cytoplasmic side of the membrane. The helical transmembrane segment at 359-379 (WTFVAATMGIAVALPHFSALL) threads the bilayer. Position 380 (S380) is a topological domain, extracellular. Residues 381–401 (FFGGFIFAPTTYFIPCIIWLI) traverse the membrane as a helical segment. At 402–413 (LKKPKRFSLSWC) the chain is on the cytoplasmic side. A helical membrane pass occupies residues 414 to 434 (INWICIILGVLVMIIAPIGGL). The Extracellular portion of the chain corresponds to 435–451 (AKLMNALKQPDSSCKST).

It belongs to the amino acid/polyamine transporter 2 family. Amino acid/auxin permease (AAAP) (TC 2.A.18.2) subfamily.

The protein resides in the cell membrane. Functionally, amino acid transporter. The sequence is that of Lysine histidine transporter-like 3 from Arabidopsis thaliana (Mouse-ear cress).